The chain runs to 317 residues: MPVQGSQRRLLGSLNSTPTATPHLGLAANQTGARCREVSIPDGLFLSLGLVSLVENVLVVTAIAKNRNLHSPMYCFICCLALSDLLVSGSNMLETAVTLLLEAGALVARAAVVQQLDNVIDVITCSSMLSSLCFLGAIAVDRYISIFYALRYHSIVTLPRAQRAIAAIWVASVLCSTLFIAYYDHAAVLLCLVVFFLAMLVLMAVLYVHMLARACQHAQGIARLHKRQRLAHQGFGLKGAATLTILLGIFFLCWGPFFLHLTLIVLCPQHPTCSCIFKNFNLFLALIICNAIIDPLIYAFRSQELRRTLKEVLLCSW.

The Extracellular segment spans residues 1-37; sequence MPVQGSQRRLLGSLNSTPTATPHLGLAANQTGARCRE. Asn-29 carries an N-linked (GlcNAc...) asparagine glycan. Residues 38–63 form a helical membrane-spanning segment; that stretch reads VSIPDGLFLSLGLVSLVENVLVVTAI. The Cytoplasmic portion of the chain corresponds to 64-72; it reads AKNRNLHSP. The helical transmembrane segment at 73–93 threads the bilayer; it reads MYCFICCLALSDLLVSGSNML. Topologically, residues 94 to 118 are extracellular; the sequence is ETAVTLLLEAGALVARAAVVQQLDN. The chain crosses the membrane as a helical span at residues 119-140; that stretch reads VIDVITCSSMLSSLCFLGAIAV. At 141–163 the chain is on the cytoplasmic side; sequence DRYISIFYALRYHSIVTLPRAQR. Residues 164-183 form a helical membrane-spanning segment; it reads AIAAIWVASVLCSTLFIAYY. Over 184 to 191 the chain is Extracellular; that stretch reads DHAAVLLC. A helical membrane pass occupies residues 192 to 211; sequence LVVFFLAMLVLMAVLYVHML. Residues 212–240 lie on the Cytoplasmic side of the membrane; that stretch reads ARACQHAQGIARLHKRQRLAHQGFGLKGA. The chain crosses the membrane as a helical span at residues 241–266; that stretch reads ATLTILLGIFFLCWGPFFLHLTLIVL. At 267–279 the chain is on the extracellular side; it reads CPQHPTCSCIFKN. The helical transmembrane segment at 280 to 300 threads the bilayer; sequence FNLFLALIICNAIIDPLIYAF. The Cytoplasmic segment spans residues 301–317; it reads RSQELRRTLKEVLLCSW. A lipid anchor (S-palmitoyl cysteine) is attached at Cys-315.

Belongs to the G-protein coupled receptor 1 family. As to quaternary structure, interacts with MGRN1, but does not undergo MGRN1-mediated ubiquitination; this interaction competes with GNAS-binding and thus inhibits agonist-induced cAMP production. Interacts with OPN3; the interaction results in a decrease in MC1R-mediated cAMP signaling and ultimately a decrease in melanin production in melanocytes. Expressed in the adrenal gland.

Its subcellular location is the cell membrane. Functionally, receptor for MSH (alpha, beta and gamma) and ACTH. The activity of this receptor is mediated by G proteins which activate adenylate cyclase. Mediates melanogenesis, the production of eumelanin (black/brown) and phaeomelanin (red/yellow), via regulation of cAMP signaling in melanocytes. The sequence is that of Melanocyte-stimulating hormone receptor (MC1R) from Macaca mulatta (Rhesus macaque).